Here is a 202-residue protein sequence, read N- to C-terminus: ATP-dependent dethiobiotin synthetase BioD (202 aa).

Gly-12–Ile-17 contacts ATP. A Mg(2+)-binding site is contributed by Thr-16. Lys-32 is a catalytic residue. A substrate-binding site is contributed by Ser-36. ATP is bound by residues Asp-43, Glu-94–Gly-97, and Pro-178–Val-180. Positions 43 and 94 each coordinate Mg(2+).

The protein belongs to the dethiobiotin synthetase family. As to quaternary structure, homodimer. Requires Mg(2+) as cofactor.

It localises to the cytoplasm. It carries out the reaction (7R,8S)-7,8-diammoniononanoate + CO2 + ATP = (4R,5S)-dethiobiotin + ADP + phosphate + 3 H(+). The protein operates within cofactor biosynthesis; biotin biosynthesis; biotin from 7,8-diaminononanoate: step 1/2. Catalyzes a mechanistically unusual reaction, the ATP-dependent insertion of CO2 between the N7 and N8 nitrogen atoms of 7,8-diaminopelargonic acid (DAPA, also called 7,8-diammoniononanoate) to form a ureido ring. The protein is ATP-dependent dethiobiotin synthetase BioD of Sphingopyxis alaskensis (strain DSM 13593 / LMG 18877 / RB2256) (Sphingomonas alaskensis).